The sequence spans 549 residues: mRNA-capping enzyme subunit beta (549 aa).

N-acetylserine is present on Ser2. A Phosphoserine modification is found at Ser15. A disordered region spans residues 30–169 (LQKLSEAANG…QGNEGNIASN (140 aa)). A compositionally biased stretch (acidic residues) spans 86 to 96 (DDEETDTDDEM). Ser124 carries the post-translational modification Phosphoserine. Residues 135–157 (AKLEKPSDDSIHQNSKSDEEQRI) are compositionally biased toward basic and acidic residues. Residue Lys223 is the N6-GMP-lysine intermediate of the active site.

Belongs to the fungal TPase family. As to quaternary structure, heterodimer. The mRNA-capping enzyme is composed of two separate chains alpha and beta, respectively a mRNA guanylyltransferase and an mRNA 5'-triphosphate monophosphatase. The cofactor is Mg(2+).

Its subcellular location is the nucleus. It catalyses the reaction a 5'-end triphospho-ribonucleoside in mRNA + H2O = a 5'-end diphospho-ribonucleoside in mRNA + phosphate + H(+). Functionally, first step of mRNA capping. Converts the 5'-triphosphate end of a nascent mRNA chain into a diphosphate end. The protein is mRNA-capping enzyme subunit beta (CET1) of Saccharomyces cerevisiae (strain ATCC 204508 / S288c) (Baker's yeast).